We begin with the raw amino-acid sequence, 334 residues long: RNA 3'-terminal phosphate cyclase (334 aa).

ATP is bound at residue 279 to 282 (HMGD). His303 functions as the Tele-AMP-histidine intermediate in the catalytic mechanism.

It belongs to the RNA 3'-terminal cyclase family. Type 1 subfamily.

Its subcellular location is the cytoplasm. It carries out the reaction a 3'-end 3'-phospho-ribonucleotide-RNA + ATP = a 3'-end 2',3'-cyclophospho-ribonucleotide-RNA + AMP + diphosphate. In terms of biological role, catalyzes the conversion of 3'-phosphate to a 2',3'-cyclic phosphodiester at the end of RNA. The mechanism of action of the enzyme occurs in 3 steps: (A) adenylation of the enzyme by ATP; (B) transfer of adenylate to an RNA-N3'P to produce RNA-N3'PP5'A; (C) and attack of the adjacent 2'-hydroxyl on the 3'-phosphorus in the diester linkage to produce the cyclic end product. The biological role of this enzyme is unknown but it is likely to function in some aspects of cellular RNA processing. In Metallosphaera sedula (strain ATCC 51363 / DSM 5348 / JCM 9185 / NBRC 15509 / TH2), this protein is RNA 3'-terminal phosphate cyclase.